A 570-amino-acid chain; its full sequence is Proline--tRNA ligase (570 aa).

Residues 238 to 257 (ARPAPAEHAEPRPLEKVETP) are disordered.

The protein belongs to the class-II aminoacyl-tRNA synthetase family. ProS type 1 subfamily. Homodimer.

It is found in the cytoplasm. It carries out the reaction tRNA(Pro) + L-proline + ATP = L-prolyl-tRNA(Pro) + AMP + diphosphate. Catalyzes the attachment of proline to tRNA(Pro) in a two-step reaction: proline is first activated by ATP to form Pro-AMP and then transferred to the acceptor end of tRNA(Pro). As ProRS can inadvertently accommodate and process non-cognate amino acids such as alanine and cysteine, to avoid such errors it has two additional distinct editing activities against alanine. One activity is designated as 'pretransfer' editing and involves the tRNA(Pro)-independent hydrolysis of activated Ala-AMP. The other activity is designated 'posttransfer' editing and involves deacylation of mischarged Ala-tRNA(Pro). The misacylated Cys-tRNA(Pro) is not edited by ProRS. This Geobacter sulfurreducens (strain ATCC 51573 / DSM 12127 / PCA) protein is Proline--tRNA ligase.